The sequence spans 445 residues: Putative transcription factor bHLH056 (445 aa).

3 disordered regions span residues 36 to 70 (NQTH…PPHL), 224 to 260 (QIQP…AEMH), and 365 to 445 (PFPN…QPTA). The span at 231-246 (SKLKAREETHGTEEAR) shows a compositional bias: basic and acidic residues. A bHLH domain is found at 255-304 (RTAEMHNLAERRRREKINEKMKTLQQLIPRCNKSTKVSTLDDAIEYVKSL). Positions 418 to 433 (QGQTTSQLSSGQASSS) are enriched in low complexity.

Homodimer.

The protein resides in the nucleus. This chain is Putative transcription factor bHLH056 (BHLH56), found in Arabidopsis thaliana (Mouse-ear cress).